Reading from the N-terminus, the 460-residue chain is Probable carboxylesterase 11 (460 aa).

Polar residues-rich tracts occupy residues 26-35 (QSSGDESSSD) and 132-145 (NSYG…SPEA). Disordered regions lie at residues 26–52 (QSSG…APNP) and 132–161 (NSYG…SSGG). The Involved in the stabilization of the negatively charged intermediate by the formation of the oxyanion hole signature appears at 173–175 (HGG). Active-site residues include Ser289, Asp392, and His422.

It belongs to the 'GDXG' lipolytic enzyme family. Expressed in roots, leaves, stems, flowers and siliques.

The enzyme catalyses a carboxylic ester + H2O = an alcohol + a carboxylate + H(+). Carboxylesterase acting on esters with varying acyl chain length. In Arabidopsis thaliana (Mouse-ear cress), this protein is Probable carboxylesterase 11 (CXE11).